A 339-amino-acid chain; its full sequence is Ketol-acid reductoisomerase (NADP(+)) (339 aa).

The KARI N-terminal Rossmann domain maps to 1 to 182 (MRVYYDRDAD…GGGRSGVIET (182 aa)). Residues 24 to 27 (YGSQ), R48, S51, T53, and 83 to 86 (DEHQ) each bind NADP(+). Residue H108 is part of the active site. G134 contacts NADP(+). The region spanning 183–328 (TFKEECETDL…AELRAMMPWI (146 aa)) is the KARI C-terminal knotted domain. The Mg(2+) site is built by D191, E195, E227, and E231. A substrate-binding site is contributed by S252.

It belongs to the ketol-acid reductoisomerase family. It depends on Mg(2+) as a cofactor.

The enzyme catalyses (2R)-2,3-dihydroxy-3-methylbutanoate + NADP(+) = (2S)-2-acetolactate + NADPH + H(+). It catalyses the reaction (2R,3R)-2,3-dihydroxy-3-methylpentanoate + NADP(+) = (S)-2-ethyl-2-hydroxy-3-oxobutanoate + NADPH + H(+). It participates in amino-acid biosynthesis; L-isoleucine biosynthesis; L-isoleucine from 2-oxobutanoate: step 2/4. The protein operates within amino-acid biosynthesis; L-valine biosynthesis; L-valine from pyruvate: step 2/4. In terms of biological role, involved in the biosynthesis of branched-chain amino acids (BCAA). Catalyzes an alkyl-migration followed by a ketol-acid reduction of (S)-2-acetolactate (S2AL) to yield (R)-2,3-dihydroxy-isovalerate. In the isomerase reaction, S2AL is rearranged via a Mg-dependent methyl migration to produce 3-hydroxy-3-methyl-2-ketobutyrate (HMKB). In the reductase reaction, this 2-ketoacid undergoes a metal-dependent reduction by NADPH to yield (R)-2,3-dihydroxy-isovalerate. The chain is Ketol-acid reductoisomerase (NADP(+)) from Rhizorhabdus wittichii (strain DSM 6014 / CCUG 31198 / JCM 15750 / NBRC 105917 / EY 4224 / RW1) (Sphingomonas wittichii).